Consider the following 702-residue polypeptide: Zinc finger CCCH domain-containing protein 62 (702 aa).

The tract at residues 1-77 (MAAPAADDDD…SYDDPTFDPA (77 aa)) is disordered. Residues 18–54 (EEDDGEEEEGSEEEVESDDEEEEEGEGYDWSEEDDPE) show a composition bias toward acidic residues. The SAP domain occupies 132–166 (LEKLKVYECKAYLRMHKLRLSGNKEVLLTRIRGQI). 4 disordered regions span residues 288–349 (EKHA…NTVQ), 405–532 (SRTS…QQQP), 546–602 (GGTS…RETH), and 634–673 (QMSQ…NPQR). Over residues 298 to 325 (KTREVRIKDKENERMRRLNRNKENKSKG) the composition is skewed to basic and acidic residues. Composition is skewed to polar residues over residues 326–349 (QDNM…NTVQ) and 405–419 (SRTS…QAPS). Residues 430–448 (QQQQQQQPPKSIKPAPIQQ) show a composition bias toward low complexity. Polar residues-rich tracts occupy residues 472–502 (SQEQ…QHGG), 522–532 (QQAVSYTQQQP), 546–565 (GGTS…NWGS), and 575–591 (PFTQ…NGSG). The C3H1-type zinc-finger motif lies at 674 to 702 (FRPWKPCFIYQQQGWCPYGENCKFMHDLR).

In Oryza sativa subsp. japonica (Rice), this protein is Zinc finger CCCH domain-containing protein 62.